The following is a 122-amino-acid chain: Large ribosomal subunit protein uL14 (122 aa).

This sequence belongs to the universal ribosomal protein uL14 family. Part of the 50S ribosomal subunit. Forms a cluster with proteins L3 and L19. In the 70S ribosome, L14 and L19 interact and together make contacts with the 16S rRNA in bridges B5 and B8.

Functionally, binds to 23S rRNA. Forms part of two intersubunit bridges in the 70S ribosome. This chain is Large ribosomal subunit protein uL14, found in Lysinibacillus sphaericus (strain C3-41).